Reading from the N-terminus, the 559-residue chain is Apolipoprotein N-acyltransferase 2 (559 aa).

Transmembrane regions (helical) follow at residues 27 to 47 (LAGS…GFLL), 53 to 73 (HVAC…SFWL), 86 to 106 (ASTV…ACIL), 114 to 134 (ACAF…GILA), 153 to 173 (IADI…NACV), and 187 to 207 (VPVF…SLYG). Residues 221 to 507 (LALAIVQQNA…SAVLHVPVYP (287 aa)) enclose the CN hydrolase domain. The active-site Proton acceptor is glutamate 288. The active site involves lysine 358. Catalysis depends on cysteine 416, which acts as the Nucleophile. A helical transmembrane segment spans residues 519 to 539 (WVIVLCALIFFAEGVRMAVHT).

This sequence belongs to the CN hydrolase family. Apolipoprotein N-acyltransferase subfamily.

The protein localises to the cell inner membrane. It catalyses the reaction N-terminal S-1,2-diacyl-sn-glyceryl-L-cysteinyl-[lipoprotein] + a glycerophospholipid = N-acyl-S-1,2-diacyl-sn-glyceryl-L-cysteinyl-[lipoprotein] + a 2-acyl-sn-glycero-3-phospholipid + H(+). The protein operates within protein modification; lipoprotein biosynthesis (N-acyl transfer). In terms of biological role, catalyzes the phospholipid dependent N-acylation of the N-terminal cysteine of apolipoprotein, the last step in lipoprotein maturation. This Treponema pallidum (strain Nichols) protein is Apolipoprotein N-acyltransferase 2.